A 150-amino-acid chain; its full sequence is Guanine nucleotide-binding protein subunit gamma 2 (150 aa).

Acidic residues predominate over residues 1 to 11 (MRGEANGEEEQ). Positions 1–59 (MRGEANGEEEQQPPRRNHLRDDAEEEEEVERRAARPVSGQQQQQQRRRPTDVGGGAAMR) are disordered. Residues 65–97 (GKHRLSAAIARLDQELQSLQDELNELETMEPAS) adopt a coiled-coil conformation. Residues 71–137 (AAIARLDQEL…RWFQRVRSSR (67 aa)) enclose the G protein gamma domain.

G proteins are composed of 3 units, alpha, beta and gamma. Interacts with the beta subunit RGB1.

It localises to the cell membrane. Guanine nucleotide-binding proteins (G proteins) are involved as modulators or transducers in various transmembrane signaling systems. This chain is Guanine nucleotide-binding protein subunit gamma 2, found in Oryza sativa subsp. indica (Rice).